The chain runs to 105 residues: MWLSTSPYRKGSQCGEAFSQIPGHNLNKKTPPGVKPPESHVCGEVGVGYPSTERHIRDRLGRKPCEYQECRQKAYTCKPCGNAFRFHHSFHIHERPHSGENLYEC.

Residues 75 to 97 form a C2H2-type zinc finger; sequence YTCKPCGNAFRFHHSFHIHERPH.

The sequence is that of Putative zinc finger protein 861 (ZNF861P) from Homo sapiens (Human).